The following is a 2183-amino-acid chain: MALLSRTAAEEVIASFTSEEQSRISTQAVLALTNVEKDKHDLFNYALPELAKMRLFNSGIYLSPHSYRPHSHPVCKTLENNILFNILPSYLDNSFYLVSIKKNKVDFLKRRHPDLQMVETINRYISSIDKTRYGGFFHVSPSKISAKFKCDRRTGFEDDASLIDLIPGCMEGARKRFFFHDELHYWTKEALITFLDHVKPEVMLASIVFPPEILAGAKESLNPWCYTFRIVGKDLVFFPDGEQSEAYIQPVAGSYLLRTGKITTPSGDIFQLDLLKSSFSHHLISITKGEAIGQKMRFFNGFEAVAMKGLNPLRRKVESCLPISKNTILKIYRYLRTLKKPDLQSAMAKLSQVCKDPNGYEIKFFEEFSKLCLKCDTLNTNMIPDMKRIVQGFFLKLFPNPISRNFKVVQQLHLDNFIETLEEFNFSINTESLSLNWKDDLEFVNLTFGDTDFNVEDSFAEAWGTKKDVVNITTVHHSPYLVSKFESYDHQFHSILSVKSISALTRIAKIVLSLYDPCVVEAFSESRVTNLAVNVIIAANLRACFAVTDLWRIFEGILLKECKRAQGKMRKRFHFELGIRWFLFVDVSNQWFLPPCRDGLIARSVSFDQFIKGCQRDNSLHNGRMSLRQVLKGPKLQALFDVSELSIIHNVEMENAPEAGSTLDAGIKPTSSPLEVVPIENARCNLAPCKCDLNCFIQPADVNSLHGNLVFLDFIGGSKGRGASFYSRDLKGYSYTGFSHVSRGWPAFLDKFLSDNKIPLNFYNQCLVQEYSTGHGLSMHKDDESIYDINHQVLTVNYSGDAIFCIECLGSGFEIPLSGPQMLLMPFGFQKEHRHGIKSPSKGRISLTFRLTKEGDSQVPIQEVVTICDHGDSDDRAALKALERRSHQSGGRPAVELEGHEREKVNSDSSDSAPVQEFLIQIDSSLLEYALKSLSGLSKNVVNCDMCLCNSPWLKNEELRFSEALRDLAFAQGLIQLIDFLCLKVLRCAEVNRIISELPTHVFPLRGTMHIVDLDDESIRGDVKEGSFSGFRRWKVMSCSTDLIMLAFLKPKMTLGGELRSHEDECELSDLTEKLHGCSVILSRKFEPDLFHSFDVEADGNCFWHSVGPLIGVDGEYLKRILHDQAKKDGVKCPRLSKQLEGNTWAEREAVAYFCSHYGIRLNVLYTREECTWIFKPHEVLKAATLICQDNHFKPCMPVNGCVIRAISSALNRREVDVLAVLGKPAHEDLFEEVAEGRGFSIFDLTRLFEIFSICGSVDTGGELIMVNENGRIPAEFSLEKEHLAHIPTLSRRKFSPIVSDLNRVSNSAMRFLAINGAEVDYRPSIDRASTLLDSFEIGATGVLCQGIKEAQKDLASKLIPELVHERKLIMILGTFGCGKSSLFKKFIEKSPGKAITFVSPRRSLAESINHDLGLARVGGKKTGKSKDLKNVRVKTFELFILHLDSIKEGHTVVIDEIQLFPPGYIDLIILGLKPNVNIIIAGDPCQSDYDCSSDRHIFAGSESDIMRILSGRSYKFNILSQRFRNPVFYGRLPCNLNKTRLTLDEEEYTLWDSIQEFSMMGRKDCPVVLVSSFEEKKIVAAHLGLKMKCITYGESTGLNFQKGAILVTYESALTSDRRWWTALSRFSHDIHFINGMGVTWDNAITHFVGKPLHKFFTKRACNDDIIDLLPGRPELIEGFQSQVGADEGVREAKLVGDPWLKTKIFLGQNPDFEIEIADEVEAAEDWFKTHIPIMSLEAVRAQWVHKLISREDREFRIGDITTEQFTDDHSKNRGQELTNAAERYEAIYPRHKGTDTATFLMAVKKRLSFSSPAAEHAKLRRAKPFGKFLLDTFLKRVPLNSSHDEKMMQEAVHAFEEKKLSKSMATIENHSGRSCEDWPVDKALIFMKSQLCTKFDNRFRSAKAGQTLACFQHSVLCRFAPYMRYIESKVTEVLPKNLYIHSGKNIDDLAAWVTTSKFNGVCTESDYEAFDASQDHFILAFELEVMKFLGLPSDLIADYTFIKTHLGSKLGSFAIMRFTGEASTFLFNTMANMLFTFLRYDLNGREAICFAGDDMCANSRLKVTNRFSNFLDKIKLKAKVQFTATPTFCGWGLCEHGVFKKPDLVLERLQIARETRNLENCIDNYAIEVSCAYKMGENLNLYLTPQEVDAHYNCVRFIVQHNHLLKSNIRDLFKGESLPASS.

The Alphavirus-like MT domain maps to 63 to 256 (SPHSYRPHSH…YIQPVAGSYL (194 aa)). A Fe2OG dioxygenase domain is found at 762–853 (FYNQCLVQEY…RISLTFRLTK (92 aa)). 3 residues coordinate Fe cation: His-780, Asp-782, and His-835. Arg-844 contacts 2-oxoglutarate. A disordered region spans residues 883 to 910 (ERRSHQSGGRPAVELEGHEREKVNSDSS). Positions 895–906 (VELEGHEREKVN) are enriched in basic and acidic residues. One can recognise an OTU domain in the interval 1091-1199 (FHSFDVEADG…DNHFKPCMPV (109 aa)). One can recognise a Peptidase C23 domain in the interval 1198 to 1288 (PVNGCVIRAI…LEKEHLAHIP (91 aa)). Active-site residues include Cys-1202 and His-1283. The (+)RNA virus helicase ATP-binding domain maps to 1349–1520 (KEAQKDLASK…SGRSYKFNIL (172 aa)). 1374–1381 (GTFGCGKS) contributes to the ATP binding site. Residues 1521–1667 (SQRFRNPVFY…TKRACNDDII (147 aa)) form the (+)RNA virus helicase C-terminal domain. In terms of domain architecture, RdRp catalytic spans 1961–2068 (GVCTESDYEA…NSRLKVTNRF (108 aa)).

Belongs to the potexviruses/carlaviruses RNA replication protein family. Fe(2+) is required as a cofactor. Specific enzymatic cleavages by the viral protease yield mature proteins.

It catalyses the reaction ATP + H2O = ADP + phosphate + H(+). It carries out the reaction RNA(n) + a ribonucleoside 5'-triphosphate = RNA(n+1) + diphosphate. Functionally, RNA-directed RNA polymerase involved in viral RNA replication. In terms of biological role, protease: Thiol protease that cleaves the polyprotein. The polypeptide is RNA replication polyprotein (Apple stem pitting virus (isolate PA66) (ASPV)).